Here is a 321-residue protein sequence, read N- to C-terminus: Phospho-N-acetylmuramoyl-pentapeptide-transferase (321 aa).

A run of 9 helical transmembrane segments spans residues methionine 1–methionine 21, threonine 53–tryptophan 73, leucine 77–tryptophan 97, glycine 110–valine 130, leucine 145–phenylalanine 165, glycine 174–alanine 194, tyrosine 200–asparagine 220, isoleucine 226–histidine 248, and isoleucine 301–isoleucine 321.

This sequence belongs to the glycosyltransferase 4 family. MraY subfamily. The cofactor is Mg(2+).

The protein localises to the cell membrane. The catalysed reaction is UDP-N-acetyl-alpha-D-muramoyl-L-alanyl-gamma-D-glutamyl-L-lysyl-D-alanyl-D-alanine + di-trans,octa-cis-undecaprenyl phosphate = Mur2Ac(oyl-L-Ala-gamma-D-Glu-L-Lys-D-Ala-D-Ala)-di-trans,octa-cis-undecaprenyl diphosphate + UMP. Its pathway is cell wall biogenesis; peptidoglycan biosynthesis. In terms of biological role, catalyzes the initial step of the lipid cycle reactions in the biosynthesis of the cell wall peptidoglycan: transfers peptidoglycan precursor phospho-MurNAc-pentapeptide from UDP-MurNAc-pentapeptide onto the lipid carrier undecaprenyl phosphate, yielding undecaprenyl-pyrophosphoryl-MurNAc-pentapeptide, known as lipid I. The polypeptide is Phospho-N-acetylmuramoyl-pentapeptide-transferase (Lactiplantibacillus plantarum (strain ATCC BAA-793 / NCIMB 8826 / WCFS1) (Lactobacillus plantarum)).